The following is a 429-amino-acid chain: UDP-N-acetylglucosamine 1-carboxyvinyltransferase (429 aa).

22–23 (KN) serves as a coordination point for phosphoenolpyruvate. R102 contacts UDP-N-acetyl-alpha-D-glucosamine. C126 functions as the Proton donor in the catalytic mechanism. Position 126 is a 2-(S-cysteinyl)pyruvic acid O-phosphothioketal (C126). Residues 131-135 (RPVDL), D316, and I338 contribute to the UDP-N-acetyl-alpha-D-glucosamine site.

It belongs to the EPSP synthase family. MurA subfamily.

It is found in the cytoplasm. It carries out the reaction phosphoenolpyruvate + UDP-N-acetyl-alpha-D-glucosamine = UDP-N-acetyl-3-O-(1-carboxyvinyl)-alpha-D-glucosamine + phosphate. It functions in the pathway cell wall biogenesis; peptidoglycan biosynthesis. Cell wall formation. Adds enolpyruvyl to UDP-N-acetylglucosamine. The chain is UDP-N-acetylglucosamine 1-carboxyvinyltransferase from Methylocella silvestris (strain DSM 15510 / CIP 108128 / LMG 27833 / NCIMB 13906 / BL2).